Here is a 401-residue protein sequence, read N- to C-terminus: Hemorrhagic metalloproteinase-disintegrin-like kaouthiagin (401 aa).

One can recognise a Peptidase M12B domain in the interval K14–P208. The Ca(2+) site is built by E17 and D101. The N-linked (GlcNAc...) asparagine glycan is linked to N112. Disulfide bonds link C125/C203, C164/C187, and C166/C171. H149 provides a ligand contact to Zn(2+). Residue E150 is part of the active site. Zn(2+)-binding residues include H153 and H159. Residues C203, N206, I218, N221, F223, E225, E228, and D231 each contribute to the Ca(2+) site. A Disintegrin domain is found at P216–N285. Intrachain disulfides connect C219–C248, C230–C243, C232–C238, C257–C277, C264–C296, C289–C301, C308–C358, C323–C366, C336–C346, C353–C389, and C383–C394. The D/ECD-tripeptide signature appears at D263–D265. Ca(2+)-binding residues include D265, L266, E268, and D280.

This sequence belongs to the venom metalloproteinase (M12B) family. P-III subfamily. P-IIIa sub-subfamily. In terms of assembly, monomer. The cofactor is Zn(2+). As to expression, expressed by the venom gland.

The protein localises to the secreted. Functionally, snake venom zinc protease that inhibits hemostasis by binding and cleaving the vWF in humans. Also has and inhibitory effect on the collagen-induced platelet aggregation. The chain is Hemorrhagic metalloproteinase-disintegrin-like kaouthiagin from Naja kaouthia (Monocled cobra).